Here is a 107-residue protein sequence, read N- to C-terminus: SDSIVHVTDDSFEEEVXKSPDPVLVDYWADWCGPCKMXAPVXDEIADEYAGRVKXAKXNXDENPNTPPRYGXRGIPTLMLFRGGEVEATKVGAVSKSQLTAFLDSNX.

The Thioredoxin domain occupies Asp-2–Xaa-107. Cys-32 and Cys-35 are oxidised to a cystine.

Belongs to the thioredoxin family.

In terms of biological role, participates in various redox reactions through the reversible oxidation of its active center dithiol to a disulfide and catalyzes dithiol-disulfide exchange reactions. The chain is Thioredoxin (trxA) from Allochromatium vinosum (Chromatium vinosum).